We begin with the raw amino-acid sequence, 490 residues long: ATP synthase subunit beta, chloroplastic (490 aa).

An ATP-binding site is contributed by 170-177 (GGXGVGKT).

This sequence belongs to the ATPase alpha/beta chains family. As to quaternary structure, F-type ATPases have 2 components, CF(1) - the catalytic core - and CF(0) - the membrane proton channel. CF(1) has five subunits: alpha(3), beta(3), gamma(1), delta(1), epsilon(1). CF(0) has four main subunits: a(1), b(1), b'(1) and c(9-12).

It localises to the plastid. It is found in the chloroplast thylakoid membrane. It carries out the reaction ATP + H2O + 4 H(+)(in) = ADP + phosphate + 5 H(+)(out). Functionally, produces ATP from ADP in the presence of a proton gradient across the membrane. The catalytic sites are hosted primarily by the beta subunits. This chain is ATP synthase subunit beta, chloroplastic, found in Ipomoea coccinea (Scarlet morning-glory).